The sequence spans 282 residues: Acetyl-coenzyme A carboxylase carboxyl transferase subunit beta 1 (282 aa).

In terms of domain architecture, CoA carboxyltransferase N-terminal spans 23 to 282 (LMTKCPECRH…MHTKGGVQHV (260 aa)). Cysteine 27, cysteine 30, cysteine 46, and cysteine 49 together coordinate Zn(2+). The segment at 27-49 (CPECRHILLTKELEKNHKVCTKC) adopts a C4-type zinc-finger fold.

Belongs to the AccD/PCCB family. As to quaternary structure, acetyl-CoA carboxylase is a heterohexamer composed of biotin carboxyl carrier protein (AccB), biotin carboxylase (AccC) and two subunits each of ACCase subunit alpha (AccA) and ACCase subunit beta (AccD). The cofactor is Zn(2+).

The protein localises to the cytoplasm. The catalysed reaction is N(6)-carboxybiotinyl-L-lysyl-[protein] + acetyl-CoA = N(6)-biotinyl-L-lysyl-[protein] + malonyl-CoA. Its pathway is lipid metabolism; malonyl-CoA biosynthesis; malonyl-CoA from acetyl-CoA: step 1/1. Component of the acetyl coenzyme A carboxylase (ACC) complex. Biotin carboxylase (BC) catalyzes the carboxylation of biotin on its carrier protein (BCCP) and then the CO(2) group is transferred by the transcarboxylase to acetyl-CoA to form malonyl-CoA. This chain is Acetyl-coenzyme A carboxylase carboxyl transferase subunit beta 1, found in Lysinibacillus sphaericus (strain C3-41).